A 240-amino-acid polypeptide reads, in one-letter code: MVVTDSPVSGIMADQNIDPNTTTSPSPKEKHVSAIKAISGDEKAPSKEKKNYASKKSTTVIQKSHCFQNSWTFWFDNPSSKSNQVIWGSSLRSLYTFGTIEEFWSLYNNIHPPTKWVSGADLYCFKDKIEPKWEDPICANGGKWSMMFPKATLECNWLNTLLALVGEQFDQGDEICGAVLNFRARGDRISLWTKNAANEEAQLSIGKQWKELLGYNETIGFIVHEDAKTLDRDAKRRYTV.

Positions 1–51 are disordered; that stretch reads MVVTDSPVSGIMADQNIDPNTTTSPSPKEKHVSAIKAISGDEKAPSKEKKN. Residues 17-26 are compositionally biased toward polar residues; the sequence is IDPNTTTSPS. Residues 39–51 are compositionally biased toward basic and acidic residues; that stretch reads SGDEKAPSKEKKN. EIF4G-binding stretches follow at residues 65-68 and 75-111; these read HCFQ and FDNPSSKSNQVIWGSSLRSLYTFGTIEEFWSLYNNIH. MRNA-binding positions include 83–88, K115, and 133–134; these read NQVIWG and WE. A disulfide bond links C138 and C176. Residues 159–168 are EIF4G-binding; the sequence is NTLLALVGEQ. MRNA-binding positions include 183–188 and 228–232; these read RARGDR and KTLDR.

It belongs to the eukaryotic initiation factor 4E family. As to quaternary structure, EIF4F is a multi-subunit complex, the composition of which varies with external and internal environmental conditions. It is composed of at least EIF4A, EIF4E and EIF4G. EIF4E is also known to interact with other partners. In higher plants two isoforms of EIF4F have been identified, named isoform EIF4F and isoform EIF(iso)4F. Isoform EIF4F has subunits p220 and p26, whereas isoform EIF(iso)4F has subunits p82 and p28. In terms of processing, according to the redox status, the Cys-138-Cys-176 disulfide bridge may have a role in regulating protein function by affecting its ability to bind capped mRNA.

Its subcellular location is the nucleus. It is found in the cytoplasm. Its function is as follows. Component of the protein complex eIF4F, which is involved in the recognition of the mRNA cap, ATP-dependent unwinding of 5'-terminal secondary structure and recruitment of mRNA to the ribosome. Recognizes and binds the 7-methylguanosine-containing mRNA cap during an early step in the initiation of protein synthesis and facilitates ribosome binding by inducing the unwinding of the mRNAs secondary structures. This Arabidopsis thaliana (Mouse-ear cress) protein is Eukaryotic translation initiation factor 4E-3.